The primary structure comprises 476 residues: Serine/threonine-protein kinase Chk1 (476 aa).

Residues 1–265 (MAVPFVEDWD…IPDIKKDRWY (265 aa)) form an interaction with CLSPN region. The 257-residue stretch at 9–265 (WDLVQTLGEG…IPDIKKDRWY (257 aa)) folds into the Protein kinase domain. ATP-binding positions include 15–23 (LGEGAYGEV) and Lys-38. Residue Asp-130 is the Proton acceptor of the active site. Residue Lys-132 forms a Glycyl lysine isopeptide (Lys-Gly) (interchain with G-Cter in ubiquitin) linkage. Residues 267-331 (KPLNRGAKRP…RTGLSLWDTG (65 aa)) are disordered. Position 280 is a phosphoserine; by PKB/AKT1 (Ser-280). Low complexity predominate over residues 280 to 291 (SGGMSESSSGFS). Ser-286, Ser-296, and Ser-301 each carry phosphoserine. The span at 298 to 320 (LDFSPVNNGSSEETVKFSSSQPE) shows a compositional bias: polar residues. Ser-317 bears the Phosphoserine; by ATM and ATR mark. Phosphoserine; by ATR is present on Ser-345. An autoinhibitory region region spans residues 391-476 (QCLKETFEKL…SSQKVWFPVT (86 aa)). Lys-436 participates in a covalent cross-link: Glycyl lysine isopeptide (Lys-Gly) (interchain with G-Cter in ubiquitin). A phosphoserine mark is found at Ser-463, Ser-467, and Ser-468.

The protein belongs to the protein kinase superfamily. CAMK Ser/Thr protein kinase family. NIM1 subfamily. In terms of assembly, interacts (phosphorylated by ATR) with RAD51. Interacts with and phosphorylates CLSPN, an adapter protein that regulates the ATR-dependent phosphorylation of CHEK1. Interacts with BRCA1. Interacts with and phosphorylates CDC25A, CDC25B and CDC25C. Interacts with FBXO6, which regulates CHEK1. Interacts with PPM1D, which regulates CHEK1 through dephosphorylation. Interacts with TIMELESS; DNA damage-dependent. Interacts with FEM1B; activates CHEK1 in response to stress. Interacts with TLK1. Interacts with XPO1 and YWHAZ. Interacts with CDK5RAP3; antagonizes CHEK1. Phosphorylated by ATR in a RAD17-dependent manner in response to ultraviolet irradiation and inhibition of DNA replication. Phosphorylated by ATM in response to ionizing irradiation. ATM and ATR can both phosphorylate Ser-317 and Ser-345 and this results in enhanced kinase activity. Phosphorylation at Ser-345 induces a change in the conformation of the protein, activates the kinase activity and is a prerequisite for interaction with FBXO6 and subsequent ubiquitination at Lys-436. Phosphorylation at Ser-345 also increases binding to 14-3-3 proteins and promotes nuclear retention. Conversely, dephosphorylation at Ser-345 by PPM1D may contribute to exit from checkpoint mediated cell cycle arrest. Phosphorylation at Ser-280 by AKT1/PKB, may promote mono and/or diubiquitination. Also phosphorylated at undefined residues during mitotic arrest, resulting in decreased activity. Post-translationally, ubiquitinated. Mono or diubiquitination promotes nuclear exclusion. The activated form (phosphorylated on Ser-345) is polyubiquitinated at Lys-436 by some SCF-type E3 ubiquitin ligase complex containing FBXO6 promoting its degradation. Ubiquitination and degradation are required to terminate the checkpoint and ensure that activated CHEK1 does not accumulate as cells progress through S phase, when replication forks encounter transient impediments during normal DNA replication. 'Lys-63'-mediated ubiquitination by TRAF4 at Lys-132 activates cell cycle arrest and activation of DNA repair. In terms of processing, proteolytically cleaved at the C-terminus by SPRTN during normal DNA replication, thereby promoting CHEK1 removal from chromatin and activating the protein kinase activity. As to expression, found in all adult tissues tested. Elevated expression in testis, lung and spleen. 15.5 day old embryos show ubiquitous expression with strong expression in brain, liver, kidney, pancreas, intestine, thymus and lung.

The protein resides in the nucleus. Its subcellular location is the chromosome. The protein localises to the cytoplasm. It localises to the cytoskeleton. It is found in the microtubule organizing center. The protein resides in the centrosome. It carries out the reaction L-seryl-[protein] + ATP = O-phospho-L-seryl-[protein] + ADP + H(+). The enzyme catalyses L-threonyl-[protein] + ATP = O-phospho-L-threonyl-[protein] + ADP + H(+). With respect to regulation, activated through phosphorylation predominantly by ATR but also by ATM in response to DNA damage or inhibition of DNA replication. Activation is modulated by several mediators including CLSPN, BRCA1 and FEM1B. Proteolytic cleavage at the C-terminus by SPRTN during normal DNA replication activates the protein kinase activity. Its function is as follows. Serine/threonine-protein kinase which is required for checkpoint-mediated cell cycle arrest and activation of DNA repair in response to the presence of DNA damage or unreplicated DNA. May also negatively regulate cell cycle progression during unperturbed cell cycles. This regulation is achieved by a number of mechanisms that together help to preserve the integrity of the genome. Recognizes the substrate consensus sequence [R-X-X-S/T]. Binds to and phosphorylates CDC25A, CDC25B and CDC25C. Phosphorylation of CDC25A at 'Ser-178' and 'Thr-507' and phosphorylation of CDC25C at 'Ser-216' creates binding sites for 14-3-3 proteins which inhibit CDC25A and CDC25C. Phosphorylation of CDC25A at 'Ser-76', 'Ser-124', 'Ser-178', 'Ser-279' and 'Ser-293' promotes proteolysis of CDC25A. Phosphorylation of CDC25A at 'Ser-76' primes the protein for subsequent phosphorylation at 'Ser-79', 'Ser-82' and 'Ser-88' by NEK11, which is required for polyubiquitination and degradation of CDCD25A. Inhibition of CDC25 leads to increased inhibitory tyrosine phosphorylation of CDK-cyclin complexes and blocks cell cycle progression. Also phosphorylates NEK6. Binds to and phosphorylates RAD51 at 'Thr-309', which promotes the release of RAD51 from BRCA2 and enhances the association of RAD51 with chromatin, thereby promoting DNA repair by homologous recombination. Phosphorylates multiple sites within the C-terminus of TP53, which promotes activation of TP53 by acetylation and promotes cell cycle arrest and suppression of cellular proliferation. Also promotes repair of DNA cross-links through phosphorylation of FANCE. Binds to and phosphorylates TLK1 at 'Ser-743', which prevents the TLK1-dependent phosphorylation of the chromatin assembly factor ASF1A. This may enhance chromatin assembly both in the presence or absence of DNA damage. May also play a role in replication fork maintenance through regulation of PCNA. May regulate the transcription of genes that regulate cell-cycle progression through the phosphorylation of histones. Phosphorylates histone H3.1 (to form H3T11ph), which leads to epigenetic inhibition of a subset of genes. May also phosphorylate RB1 to promote its interaction with the E2F family of transcription factors and subsequent cell cycle arrest. Phosphorylates SPRTN, promoting SPRTN recruitment to chromatin. Reduces replication stress and activates the G2/M checkpoint, by phosphorylating and inactivating PABIR1/FAM122A and promoting the serine/threonine-protein phosphatase 2A-mediated dephosphorylation and stabilization of WEE1 levels and activity. This chain is Serine/threonine-protein kinase Chk1 (Chek1), found in Mus musculus (Mouse).